We begin with the raw amino-acid sequence, 606 residues long: NADH-ubiquinone oxidoreductase chain 5 (606 aa).

16 consecutive transmembrane segments (helical) span residues 1 to 21 (MNLFTPLMLTAMFILLLPIIM), 43 to 63 (AFIISMIPTMMFISSGQEAII), 88 to 108 (IFIPVALFVTWSIMEFSMWYM), 117 to 137 (FFKYLLMFLITMMILVTANNL), 140 to 160 (LFIGWEGVGIMSFLLIGWWYG), 171 to 191 (AILYNRIGDVGFIMAMAWFLT), 209 to 229 (LNIPLLGLLLAATGKSAQFGL), 241 to 261 (TPVSALLHSSTMVVAGVFLLI), 273 to 293 (MQTLTLCLGAITTLFTAICAL), 310 to 330 (LGLMIVTIGINQPYLAFLHIC), 366 to 386 (MPFTTTSLIIGSLALTGMPFL), 413 to 433 (LIATSLTAAYSTRIMFFVLLG), 457 to 477 (LLIGSIFAGYLISYNIPPTTI), 488 to 508 (LTALAVTIAGFILALELNLAA), 513 to 533 (FMYPSNLFKFSNLLGYFPIVM), and 582 to 602 (GLVKLYFLSFMITLALSLILL).

The protein belongs to the complex I subunit 5 family. In terms of assembly, core subunit of respiratory chain NADH dehydrogenase (Complex I) which is composed of 45 different subunits.

It localises to the mitochondrion inner membrane. The catalysed reaction is a ubiquinone + NADH + 5 H(+)(in) = a ubiquinol + NAD(+) + 4 H(+)(out). In terms of biological role, core subunit of the mitochondrial membrane respiratory chain NADH dehydrogenase (Complex I) which catalyzes electron transfer from NADH through the respiratory chain, using ubiquinone as an electron acceptor. Essential for the catalytic activity and assembly of complex I. This is NADH-ubiquinone oxidoreductase chain 5 (MT-ND5) from Felis catus (Cat).